The following is a 376-amino-acid chain: Lateral eye opsin (376 aa).

Over Met-1 to Trp-46 the chain is Extracellular. Asn-17 carries N-linked (GlcNAc...) asparagine glycosylation. The chain crosses the membrane as a helical span at residues Tyr-47–Leu-71. Residues Met-72–Asn-83 are Cytoplasmic-facing. A helical transmembrane segment spans residues Leu-84–Cys-108. The Extracellular segment spans residues Phe-109–Tyr-123. A disulfide bridge connects residues Cys-120 and Cys-197. Residues Gly-124–Leu-143 traverse the membrane as a helical segment. The Cytoplasmic portion of the chain corresponds to Asp-144–Lys-162. Residues Ala-163–Ser-186 traverse the membrane as a helical segment. Residues Arg-187–Ser-210 are Extracellular-facing. Residue Asn-193 is glycosylated (N-linked (GlcNAc...) asparagine). A helical transmembrane segment spans residues Tyr-211 to Val-238. The Cytoplasmic portion of the chain corresponds to Ala-239–Lys-274. A helical membrane pass occupies residues Val-275–Val-298. Over Phe-299–Thr-306 the chain is Extracellular. The chain crosses the membrane as a helical span at residues Pro-307 to Ser-331. Lys-318 carries the post-translational modification N6-(retinylidene)lysine. The Cytoplasmic segment spans residues His-332–Ala-376. The tract at residues Gly-349 to Ala-376 is disordered. A compositionally biased stretch (basic and acidic residues) spans Met-367–Ala-376.

This sequence belongs to the G-protein coupled receptor 1 family. Opsin subfamily. Post-translationally, phosphorylated on some or all of the serine and threonine residues present in the C-terminal region. Lateral eye.

The protein localises to the membrane. Its function is as follows. Visual pigments are the light-absorbing molecules that mediate vision. They consist of an apoprotein, opsin, covalently linked to cis-retinal. This is Lateral eye opsin from Limulus polyphemus (Atlantic horseshoe crab).